The chain runs to 367 residues: Peptide chain release factor 1 (367 aa).

N5-methylglutamine is present on glutamine 238.

Belongs to the prokaryotic/mitochondrial release factor family. In terms of processing, methylated by PrmC. Methylation increases the termination efficiency of RF1.

The protein resides in the cytoplasm. Its function is as follows. Peptide chain release factor 1 directs the termination of translation in response to the peptide chain termination codons UAG and UAA. This chain is Peptide chain release factor 1, found in Dictyoglomus turgidum (strain DSM 6724 / Z-1310).